The primary structure comprises 133 residues: Small ribosomal subunit protein uS11 (133 aa).

This sequence belongs to the universal ribosomal protein uS11 family. In terms of assembly, part of the 30S ribosomal subunit. Interacts with proteins S7 and S18. Binds to IF-3.

Functionally, located on the platform of the 30S subunit, it bridges several disparate RNA helices of the 16S rRNA. Forms part of the Shine-Dalgarno cleft in the 70S ribosome. The chain is Small ribosomal subunit protein uS11 from Cupriavidus metallidurans (strain ATCC 43123 / DSM 2839 / NBRC 102507 / CH34) (Ralstonia metallidurans).